The following is a 619-amino-acid chain: Dihydroxy-acid dehydratase 1 (619 aa).

D81 serves as a coordination point for Mg(2+). A [2Fe-2S] cluster-binding site is contributed by C122. 2 residues coordinate Mg(2+): D123 and K124. An N6-carboxylysine modification is found at K124. C201 contributes to the [2Fe-2S] cluster binding site. Mg(2+) is bound at residue E496. S522 (proton acceptor) is an active-site residue.

This sequence belongs to the IlvD/Edd family. As to quaternary structure, homodimer. [2Fe-2S] cluster serves as cofactor. The cofactor is Mg(2+).

The enzyme catalyses (2R)-2,3-dihydroxy-3-methylbutanoate = 3-methyl-2-oxobutanoate + H2O. The catalysed reaction is (2R,3R)-2,3-dihydroxy-3-methylpentanoate = (S)-3-methyl-2-oxopentanoate + H2O. It functions in the pathway amino-acid biosynthesis; L-isoleucine biosynthesis; L-isoleucine from 2-oxobutanoate: step 3/4. It participates in amino-acid biosynthesis; L-valine biosynthesis; L-valine from pyruvate: step 3/4. Its function is as follows. Functions in the biosynthesis of branched-chain amino acids. Catalyzes the dehydration of (2R,3R)-2,3-dihydroxy-3-methylpentanoate (2,3-dihydroxy-3-methylvalerate) into 2-oxo-3-methylpentanoate (2-oxo-3-methylvalerate) and of (2R)-2,3-dihydroxy-3-methylbutanoate (2,3-dihydroxyisovalerate) into 2-oxo-3-methylbutanoate (2-oxoisovalerate), the penultimate precursor to L-isoleucine and L-valine, respectively. This chain is Dihydroxy-acid dehydratase 1, found in Burkholderia lata (strain ATCC 17760 / DSM 23089 / LMG 22485 / NCIMB 9086 / R18194 / 383).